The chain runs to 483 residues: L-2-hydroxyglutarate dehydrogenase, mitochondrial (483 aa).

Residues M1–G67 constitute a mitochondrion transit peptide.

The protein belongs to the L2HGDH family. It depends on FAD as a cofactor.

Its subcellular location is the mitochondrion. It catalyses the reaction (S)-2-hydroxyglutarate + A = 2-oxoglutarate + AH2. Catalyzes the oxidation of (S)-2-hydroxyglutarate to 2-oxoglutarate. Is specific for the (S) enantiomer and possesses very poor activity toward (R)-2-hydroxyglutarate. Has no activity toward related 2-hydroxy acids, such as glycolate, L-lactate or D-lactate. The chain is L-2-hydroxyglutarate dehydrogenase, mitochondrial from Arabidopsis thaliana (Mouse-ear cress).